The following is a 261-amino-acid chain: Zinc import ATP-binding protein ZnuC (261 aa).

The ABC transporter domain occupies 6–221 (IRLEKVAVRF…PAFVELFGNN (216 aa)). 38-45 (GPNGAGKT) serves as a coordination point for ATP.

Belongs to the ABC transporter superfamily. Zinc importer (TC 3.A.1.15.5) family. In terms of assembly, the complex is composed of two ATP-binding proteins (ZnuC), two transmembrane proteins (ZnuB) and a solute-binding protein (ZnuA).

It is found in the cell inner membrane. The enzyme catalyses Zn(2+)(out) + ATP(in) + H2O(in) = Zn(2+)(in) + ADP(in) + phosphate(in) + H(+)(in). Part of the ABC transporter complex ZnuABC involved in zinc import. Responsible for energy coupling to the transport system. This is Zinc import ATP-binding protein ZnuC from Pseudomonas fluorescens (strain Pf0-1).